A 357-amino-acid polypeptide reads, in one-letter code: Histidine biosynthesis bifunctional protein HisB (357 aa).

Positions 1 to 168 (MTPILFIDRD…GIAHALADAP (168 aa)) are histidinol-phosphatase. Aspartate 8 serves as the catalytic Nucleophile. Mg(2+) is bound by residues aspartate 8, aspartate 10, and aspartate 128. Aspartate 10 (proton donor) is an active-site residue. The segment at 169–357 (RIAVVQRDTK…TALPTTKGAL (189 aa)) is imidazoleglycerol-phosphate dehydratase.

This sequence in the N-terminal section; belongs to the histidinol-phosphatase family. In the C-terminal section; belongs to the imidazoleglycerol-phosphate dehydratase family. Requires Mg(2+) as cofactor.

It localises to the cytoplasm. The enzyme catalyses D-erythro-1-(imidazol-4-yl)glycerol 3-phosphate = 3-(imidazol-4-yl)-2-oxopropyl phosphate + H2O. It catalyses the reaction L-histidinol phosphate + H2O = L-histidinol + phosphate. It participates in amino-acid biosynthesis; L-histidine biosynthesis; L-histidine from 5-phospho-alpha-D-ribose 1-diphosphate: step 6/9. Its pathway is amino-acid biosynthesis; L-histidine biosynthesis; L-histidine from 5-phospho-alpha-D-ribose 1-diphosphate: step 8/9. The polypeptide is Histidine biosynthesis bifunctional protein HisB (Stenotrophomonas maltophilia (strain R551-3)).